The chain runs to 257 residues: Acetylglutamate kinase (257 aa).

Residues 43–44, R65, and N157 contribute to the substrate site; that span reads GG. ATP is bound by residues 180–185 and 208–210; these read DVSGIL and IIT.

This sequence belongs to the acetylglutamate kinase family. ArgB subfamily. In terms of assembly, homodimer.

It is found in the cytoplasm. The enzyme catalyses N-acetyl-L-glutamate + ATP = N-acetyl-L-glutamyl 5-phosphate + ADP. The protein operates within amino-acid biosynthesis; L-arginine biosynthesis; N(2)-acetyl-L-ornithine from L-glutamate: step 2/4. Catalyzes the ATP-dependent phosphorylation of N-acetyl-L-glutamate. The polypeptide is Acetylglutamate kinase (Salmonella schwarzengrund (strain CVM19633)).